The primary structure comprises 738 residues: Zinc finger protein 235 (738 aa).

Residues 8-79 (VTFKDVAVAF…ELQTQRGKHS (72 aa)) form the KRAB domain. The segment at 263-285 (YQGNECEEAFNDSSSLELHKQVH) adopts a C2H2-type 1; degenerate zinc-finger fold. C2H2-type zinc fingers lie at residues 319–341 (YWCHECGKGFSQSSNLQTHQRVH), 347–369 (YTCHECGKSFNQSSHLYAHLPIH), 375–397 (YRCDSCGKGFSRSTDLNIHCRVH), 403–425 (YKCEVCGKGFTQRSHLQAHERIH), 431–453 (YKCGDCGKRFSCSSNLHTHQRVH), 459–481 (YKCDECGKCFSLSFNLHSHQRVH), 487–509 (YKCEECGKGFSSASSFQSHQRVH), 515–537 (FRCNVCGKGFSQSSYFQAHQRVH), 543–565 (YKCEVCGKRFNWSLNLHNHQRVH), 571–593 (YKCEECGKGFSQASNLQAHQSVH), 599–621 (FKCDACQKRFSQASHLQAHQRVH), 627–649 (YKCDTCGKAFSQRSNLQVHQIIH), 655–677 (FKCEECGKEFSWSAGLSAHQRVH), 683–705 (YTCQQCGKGFSQASHFHTHQRVH), and 711–733 (YICDVCCKGFSQRSHLIYHQRVH).

It belongs to the krueppel C2H2-type zinc-finger protein family.

The protein resides in the nucleus. May be involved in transcriptional regulation. The chain is Zinc finger protein 235 (ZNF235) from Homo sapiens (Human).